Consider the following 427-residue polypeptide: Peptidase B (427 aa).

Residues K195 and D200 each coordinate Mn(2+). Residue K207 is part of the active site. D218, D277, and E279 together coordinate Mn(2+). The active site involves R281.

The protein belongs to the peptidase M17 family. Homohexamer. Mn(2+) is required as a cofactor.

The protein localises to the cytoplasm. The enzyme catalyses Release of an N-terminal amino acid, Xaa, from a peptide or arylamide. Xaa is preferably Glu or Asp but may be other amino acids, including Leu, Met, His, Cys and Gln.. In terms of biological role, probably plays an important role in intracellular peptide degradation. In Salmonella choleraesuis (strain SC-B67), this protein is Peptidase B.